The following is an 89-amino-acid chain: Huwentoxin-IV (89 aa).

Positions 1–24 are cleaved as a signal peptide; the sequence is MVNMKASMFLALAGLVLLFVVCYA. Positions 25-52 are excised as a propeptide; it reads SESEEKEFSNELLSSVLAVDDNSKGEER. Glu53 is modified (pyrrolidone carboxylic acid (Glu); partial). 3 disulfides stabilise this stretch: Cys54–Cys69, Cys61–Cys76, and Cys68–Cys83. Ile87 carries the isoleucine amide modification.

It belongs to the neurotoxin 10 (Hwtx-1) family. 22 (Htx-4) subfamily. Two forms of huwentoxin-IV exist in the venom of H.schmidti, a non-N-terminally modified (HwTx-IV) and a naturally modified peptide with pyroglutamic acid residue at position 53 (mHwTx-IV). mHwTx-IV shows no observable difference with the unmodified toxin when applied to the TTX-S sodium channel of DRG neuron (IC(50)~50 nM) or when tested on hNav1.7/SCN9A (IC(50)=30.8 nM). In addition, similarly to the unmodified toxin, mHwTx-IV has only a weak affinity for lipid membranes. However, in contrast with HwTx-IV, which dissociates at moderate and high depolarization voltages (50-200 mV), mHwTx-IV inhibition of TTX-sensitive sodium channels is not reversed by strong depolarization voltages. In terms of tissue distribution, expressed by the venom gland.

The protein resides in the secreted. Functionally, this lethal neurotoxin (without cyclization at position 53) inhibits neuronal voltage-gated sodium channel Nav1.2/SCN2A (IC(50)=10-150 nM), rNav1.3/SCN3A (IC(50)=338 nM), Nav1.6/SCN8A (IC(50)=117 nM), and hNav1.7/SCN9A (IC(50)=9.6-33 nM). It inhibits activation of sodium channel by trapping the voltage sensor of domain II (DIIS4) in the closed configuration. The toxin neither shifts the Nav1.7/SCN9A activation curve nor modifies the slope factor. It does not slow fast-inactivation of hNav1.7/SCN9A channels. In addition, it has only a weak affinity for lipid membranes. This toxin also exists with a pyroglutamate at position 53. The sole difference observed between modified (mHwTx-IV) and unmodified toxins is that moderate or high depolarization voltages (200 mV) permit the unmodified toxin to dissociate, whereas mHwTx-IV toxin does not dissociate, even at high depolarization voltages. These data indicate that mHwTx-IV strongly binds to voltage sensor of sodium channel even at extreme depolarization voltages. The polypeptide is Huwentoxin-IV (Cyriopagopus schmidti (Chinese bird spider)).